Consider the following 548-residue polypeptide: ATP synthase subunit alpha (548 aa).

172–179 (GDRKTGKT) provides a ligand contact to ATP. The segment at 511–548 (FETTSGESVVPDENVEAMSEDDVEKESVKVRKPAPKKK) is disordered. The span at 523–534 (ENVEAMSEDDVE) shows a compositional bias: acidic residues.

Belongs to the ATPase alpha/beta chains family. In terms of assembly, F-type ATPases have 2 components, CF(1) - the catalytic core - and CF(0) - the membrane proton channel. CF(1) has five subunits: alpha(3), beta(3), gamma(1), delta(1), epsilon(1). CF(0) has three main subunits: a(1), b(2) and c(9-12). The alpha and beta chains form an alternating ring which encloses part of the gamma chain. CF(1) is attached to CF(0) by a central stalk formed by the gamma and epsilon chains, while a peripheral stalk is formed by the delta and b chains.

The protein resides in the cell membrane. It carries out the reaction ATP + H2O + 4 H(+)(in) = ADP + phosphate + 5 H(+)(out). Functionally, produces ATP from ADP in the presence of a proton gradient across the membrane. The alpha chain is a regulatory subunit. This is ATP synthase subunit alpha from Mycobacterium sp. (strain JLS).